Reading from the N-terminus, the 68-residue chain is U1-hexatoxin-Hv1a (68 aa).

5 cysteine pairs are disulfide-bonded: C3-C14, C8-C22, C13-C48, C32-C56, and C50-C63.

It belongs to the MIT-like AcTx family. As to expression, expressed by the venom gland.

The protein localises to the secreted. This Hadronyche versuta (Blue mountains funnel-web spider) protein is U1-hexatoxin-Hv1a.